We begin with the raw amino-acid sequence, 148 residues long: Lysozyme C (148 aa).

An N-terminal signal peptide occupies residues 1 to 18; sequence MKAPLLLGLLLLSVTVQG. The 130-residue stretch at 19–148 folds into the C-type lysozyme domain; the sequence is KVFERCDLAR…VSQYVRNCGV (130 aa). 4 disulfides stabilise this stretch: cysteine 24–cysteine 146, cysteine 48–cysteine 134, cysteine 83–cysteine 99, and cysteine 95–cysteine 113. Active-site residues include glutamate 53 and aspartate 71.

It belongs to the glycosyl hydrolase 22 family. In terms of assembly, monomer.

The protein resides in the secreted. It catalyses the reaction Hydrolysis of (1-&gt;4)-beta-linkages between N-acetylmuramic acid and N-acetyl-D-glucosamine residues in a peptidoglycan and between N-acetyl-D-glucosamine residues in chitodextrins.. In terms of biological role, lysozymes have primarily a bacteriolytic function; those in tissues and body fluids are associated with the monocyte-macrophage system and enhance the activity of immunoagents. The chain is Lysozyme C (LYZ) from Leptonychotes weddellii (Weddell seal).